We begin with the raw amino-acid sequence, 607 residues long: Large ribosomal subunit assembly factor BipA (607 aa).

The tr-type G domain maps to 3 to 198 (HSIRNIAIIA…SIIKYAPAPN (196 aa)). GTP is bound by residues 15 to 20 (DHGKTT) and 128 to 131 (NKID).

Belongs to the TRAFAC class translation factor GTPase superfamily. Classic translation factor GTPase family. BipA subfamily. In terms of assembly, monomer.

Its subcellular location is the cytoplasm. The enzyme catalyses GTP + H2O = GDP + phosphate + H(+). Functionally, a 50S ribosomal subunit assembly protein with GTPase activity, required for 50S subunit assembly at low temperatures, may also play a role in translation. Binds GTP and analogs. Binds the 70S ribosome between the 30S and 50S subunits, in a similar position as ribosome-bound EF-G; it contacts a number of ribosomal proteins, both rRNAs and the A-site tRNA. The sequence is that of Large ribosomal subunit assembly factor BipA from Buchnera aphidicola subsp. Acyrthosiphon pisum (strain APS) (Acyrthosiphon pisum symbiotic bacterium).